The primary structure comprises 1376 residues: MYPNWGRYGGSSHYPPPPVPPPPPPVALPEASPGPGYSSSTAPAAPSSSGFMSFREQHLAQLQQLQQMHQKQMQCVLQPHHLPPPPLPPPPVMPGGGYGDWQPPPPPMPPPPGPALSYQKQQQYKHQMIHHQRDGPPGLVPMELESPPESPPVPPGSYMPPSQSYMPPPQPPPSYYPPSSAQPYLPPAQPSPSKPQLPPPPPSIPSGNKTTIQQEPLETGAKNKNAEQKQAAPEPDPSTMTPQEQQQYWYRQHLLSLQQRTKVHLPGHKKGLVTAKDVPEPIKEEAPVPATSQIAEPLAAEEPPLPPPNEEMPPPLPPEEPQNNSSEMSEDPEEDARLKQLQAAAAHWQQHQQHRVGFQYQGIMQRHTQLQQILQQYQQVIQHSPHIQTMSLDVQLRHYEMQQQQFQRLYQEWEREFQLWEEQLHSYPHKDQLEEYEKQWKSWQGHMRATQTYLQEKVTSFQAVKNQYMGNMAMPPPFVPYSQMPPPLPTMPPPVLPPSLPPPVMPPALPSTIPPPGMPPPVMPPSLPTSVPPPGMPPSLSSAVLPPPSLSSAGPPPVLPPPSLSGAPPVLPLPPLSSATPPPGIPPPGVPQGMPPQLTAPVPPASSSQNSQVPEKPRQALLPTPVSFGSTPPSPYHPPPQSEQGNSKPLNKVFSSEQGLGESSSALSQSVIAAKDTPVKSGGLLADPPKGSFLEGPRGPREQKEQLQKLKDFGSEPQTADHLPPPDSRLQNTSRPGMYPPPGSYRPPPPMGKPPGSIVRPSAPPARSCVPMTRPPVPIPPPPPPPPPPPPPPPVIKPKTSSVKQERWDEDSFFGLWDTNDDQGLNSEFKRDTAAIPSAPVLPPPPVHPSIPPPGPMPMGMPPMSKPPPVQHTVDYGHGRDMPTNKVEQIPYGERITLRPDPLPERSAFDADHAGQRDRYDRDRDREPYFDRQSNMTDHRDFKRDRETHRDRDRVLDYERDRFDRERRPRDDRNQSYRDKKDHSSSRRGGFDRPSYDRKSDRPPYEGPPMFGGERRTYPEERMPLPAPSLGHQPPPVPRVEKKPESKNVDDILKPPGRESRPERIVVIMRGLPGSGKTHVAKLIRDKEVEFGGPAPRVLSLDDYFIAEVEKEEKDPDSGKKVKKKVMEYEYEADMEETYRTSMFKTFKKTLDDGFFPFIILDAINDRVRHFDQFWSAAKTKGFEVYLAEMSADNQTCGKRNIHGRKLKEINKMAEHWEAAPRHMMRLDIRSLLQDAAIEEVEMEDFDANIEDQKEEKKDAEEEESELGYIPKSKWEMDTSEAKLDKLDGLRTGTKRKRDWEAIASRMEDYLQLPDDYETRASEPGKKRVRWADLEEKKDADRKRAIGFVVGQTDWEKITDESGHLAERALNRTKYI.

Disordered stretches follow at residues 1–335 (MYPN…PEED) and 511–1058 (STIP…PPGR). The segment covering 14–27 (YPPPPVPPPPPPVA) has biased composition (pro residues). 2 stretches are compositionally biased toward low complexity: residues 31-50 (ASPGPGYSSSTAPAAPSSSG) and 59-80 (LAQLQQLQQMHQKQMQCVLQPH). Pro residues-rich tracts occupy residues 81-93 (HLPPPPLPPPPVM), 102-114 (QPPPPPMPPPPGP), 148-158 (PESPPVPPGSY), 166-176 (MPPPQPPPSYY), and 184-204 (YLPPAQPSPSKPQLPPPPPSI). Polar residues-rich tracts occupy residues 207 to 216 (GNKTTIQQEP) and 238 to 260 (STMTPQEQQQYWYRQHLLSLQQR). Residues 261–271 (TKVHLPGHKKG) show a composition bias toward basic residues. Positions 277 to 286 (DVPEPIKEEA) are enriched in basic and acidic residues. Pro residues-rich tracts occupy residues 303-320 (PPLPPPNEEMPPPLPPEE), 511-537 (STIPPPGMPPPVMPPSLPTSVPPPGMP), 545-594 (LPPP…PQGM), and 632-641 (PPSPYHPPPQ). The segment covering 642–671 (SEQGNSKPLNKVFSSEQGLGESSSALSQSV) has biased composition (polar residues). Lysine 675 carries the N6-methyllysine modification. The segment covering 698 to 714 (RGPREQKEQLQKLKDFG) has biased composition (basic and acidic residues). 3 stretches are compositionally biased toward pro residues: residues 738–753 (MYPPPGSYRPPPPMGK), 773–796 (TRPPVPIPPPPPPPPPPPPPPPVI), and 840–870 (PVLPPPPVHPSIPPPGPMPMGMPPMSKPPPV). A Glycyl lysine isopeptide (Lys-Gly) (interchain with G-Cter in SUMO2) cross-link involves residue lysine 886. Basic and acidic residues-rich tracts occupy residues 896 to 930 (ITLRPDPLPERSAFDADHAGQRDRYDRDRDREPYF), 937 to 1004 (TDHR…DRPP), 1013 to 1023 (GERRTYPEERM), and 1039 to 1058 (RVEKKPESKNVDDILKPPGR). Residue lysine 943 forms a Glycyl lysine isopeptide (Lys-Gly) (interchain with G-Cter in SUMO2) linkage. An involved in interaction with PPP1CA region spans residues 1326-1333 (KKRVRWAD).

As to quaternary structure, interacts with PPP1CA and NCOA5. Forms a complex with ILF2, ILF3, KHDRBS1, RBMX, NCOA5 and PPP1CA. In terms of tissue distribution, high level expression seen in the brain, adipose tissue, heart and kidney, with a low level expression in muscle, spleen and lung (at protein level).

It is found in the nucleus. The protein localises to the nucleus speckle. Its function is as follows. Plays a role in the reduction of telomerase activity during differentiation of embryonic stem cells by binding to the core promoter of TERT and controlling its down-regulation. This is YLP motif-containing protein 1 (Ylpm1) from Rattus norvegicus (Rat).